The sequence spans 274 residues: Hydroxyethylthiazole kinase (274 aa).

Met-50 contacts substrate. ATP is bound by residues Arg-126 and Ser-171. Substrate is bound at residue Ala-200.

It belongs to the Thz kinase family. It depends on Mg(2+) as a cofactor.

It carries out the reaction 5-(2-hydroxyethyl)-4-methylthiazole + ATP = 4-methyl-5-(2-phosphooxyethyl)-thiazole + ADP + H(+). It participates in cofactor biosynthesis; thiamine diphosphate biosynthesis; 4-methyl-5-(2-phosphoethyl)-thiazole from 5-(2-hydroxyethyl)-4-methylthiazole: step 1/1. Functionally, catalyzes the phosphorylation of the hydroxyl group of 4-methyl-5-beta-hydroxyethylthiazole (THZ). This chain is Hydroxyethylthiazole kinase, found in Acinetobacter baylyi (strain ATCC 33305 / BD413 / ADP1).